The chain runs to 274 residues: Bis(5'-nucleosyl)-tetraphosphatase, symmetrical (274 aa).

This sequence belongs to the Ap4A hydrolase family.

The enzyme catalyses P(1),P(4)-bis(5'-adenosyl) tetraphosphate + H2O = 2 ADP + 2 H(+). Functionally, hydrolyzes diadenosine 5',5'''-P1,P4-tetraphosphate to yield ADP. The protein is Bis(5'-nucleosyl)-tetraphosphatase, symmetrical of Shewanella baltica (strain OS223).